The sequence spans 459 residues: Bifunctional protein GlmU (459 aa).

The segment at 1–230 (MSNRFAVILA…FDETLGVNDR (230 aa)) is pyrophosphorylase. UDP-N-acetyl-alpha-D-glucosamine-binding positions include 9–12 (LAAG), Lys23, Gln73, and 78–79 (GT). Asp103 contributes to the Mg(2+) binding site. Residues Gly140, Glu155, Asn170, and Asn228 each contribute to the UDP-N-acetyl-alpha-D-glucosamine site. Asn228 is a Mg(2+) binding site. The tract at residues 231–251 (VALSQAEIIMKNRINRKNMVN) is linker. The tract at residues 252–459 (GVTIIDPSNT…VDQLLNKKKS (208 aa)) is N-acetyltransferase. Positions 333 and 351 each coordinate UDP-N-acetyl-alpha-D-glucosamine. His363 functions as the Proton acceptor in the catalytic mechanism. The UDP-N-acetyl-alpha-D-glucosamine site is built by Tyr366 and Asn377. Residues 386–387 (NY), Ala423, and Arg440 each bind acetyl-CoA.

In the N-terminal section; belongs to the N-acetylglucosamine-1-phosphate uridyltransferase family. This sequence in the C-terminal section; belongs to the transferase hexapeptide repeat family. In terms of assembly, homotrimer. Requires Mg(2+) as cofactor.

It localises to the cytoplasm. The catalysed reaction is alpha-D-glucosamine 1-phosphate + acetyl-CoA = N-acetyl-alpha-D-glucosamine 1-phosphate + CoA + H(+). It carries out the reaction N-acetyl-alpha-D-glucosamine 1-phosphate + UTP + H(+) = UDP-N-acetyl-alpha-D-glucosamine + diphosphate. The protein operates within nucleotide-sugar biosynthesis; UDP-N-acetyl-alpha-D-glucosamine biosynthesis; N-acetyl-alpha-D-glucosamine 1-phosphate from alpha-D-glucosamine 6-phosphate (route II): step 2/2. It participates in nucleotide-sugar biosynthesis; UDP-N-acetyl-alpha-D-glucosamine biosynthesis; UDP-N-acetyl-alpha-D-glucosamine from N-acetyl-alpha-D-glucosamine 1-phosphate: step 1/1. It functions in the pathway bacterial outer membrane biogenesis; LPS lipid A biosynthesis. Its function is as follows. Catalyzes the last two sequential reactions in the de novo biosynthetic pathway for UDP-N-acetylglucosamine (UDP-GlcNAc). The C-terminal domain catalyzes the transfer of acetyl group from acetyl coenzyme A to glucosamine-1-phosphate (GlcN-1-P) to produce N-acetylglucosamine-1-phosphate (GlcNAc-1-P), which is converted into UDP-GlcNAc by the transfer of uridine 5-monophosphate (from uridine 5-triphosphate), a reaction catalyzed by the N-terminal domain. The sequence is that of Bifunctional protein GlmU from Bacillus cereus (strain AH187).